Consider the following 227-residue polypeptide: NADH-quinone oxidoreductase subunit C (227 aa).

The protein belongs to the complex I 30 kDa subunit family. In terms of assembly, NDH-1 is composed of 14 different subunits. Subunits NuoB, C, D, E, F, and G constitute the peripheral sector of the complex.

The protein resides in the cell inner membrane. It catalyses the reaction a quinone + NADH + 5 H(+)(in) = a quinol + NAD(+) + 4 H(+)(out). In terms of biological role, NDH-1 shuttles electrons from NADH, via FMN and iron-sulfur (Fe-S) centers, to quinones in the respiratory chain. The immediate electron acceptor for the enzyme in this species is believed to be ubiquinone. Couples the redox reaction to proton translocation (for every two electrons transferred, four hydrogen ions are translocated across the cytoplasmic membrane), and thus conserves the redox energy in a proton gradient. The sequence is that of NADH-quinone oxidoreductase subunit C from Legionella pneumophila (strain Lens).